A 2531-amino-acid polypeptide reads, in one-letter code: Highly reducing polyketide synthase gloL (2531 aa).

One can recognise a Ketosynthase family 3 (KS3) domain in the interval 15 to 435; that stretch reads YEPLAIVGMG…GANAHVILDS (421 aa). Residues cysteine 187, histidine 322, and histidine 358 each act as for beta-ketoacyl synthase activity in the active site. The tract at residues 449 to 525 is disordered; that stretch reads TNGLSVNGHS…GHSVNGHSKP (77 aa). Low complexity predominate over residues 453–503; the sequence is SVNGHSINGNSVNGHSVNGHSTNGHSINGNSVNGHSVNGNSVNGHSTNGHS. Polar residues predominate over residues 505-521; that stretch reads NGHSANGNSINGHSVNG. Positions 602–909 are malonyl-CoA:ACP transacylase (MAT) domain; that stretch reads MVFTGQGAQW…VTALERGKDC (308 aa). The N-terminal hotdog fold stretch occupies residues 971–1099; it reads HEILGSRTVE…GQIRSGTDNP (129 aa). The dehydratase (DH) domain stretch occupies residues 971 to 1251; it reads HEILGSRTVE…GGQFSPIEED (281 aa). The PKS/mFAS DH domain occupies 971–1254; it reads HEILGSRTVE…FSPIEEDSSD (284 aa). Catalysis depends on histidine 1003, which acts as the Proton acceptor; for dehydratase activity. The interval 1109–1254 is C-terminal hotdog fold; it reads DHPRSVPSPY…FSPIEEDSSD (146 aa). The Proton donor; for dehydratase activity role is filled by aspartate 1169. Positions 1419–1597 are methyltransferase (CMet) domain; that stretch reads DFFTAAGHSK…FSGCDATVYD (179 aa). Positions 1806–2114 are enoyl reductase (ER) (ER) domain; the sequence is GLLQTLRWVP…KGSHIGKIVV (309 aa). The segment at 2139–2312 is ketoreductase (KR) domain; the sequence is GYLLVGGLGG…ASVVDIGVMG (174 aa). The 93-residue stretch at 2413–2505 folds into the Carrier domain; the sequence is MSSVETDSSI…ALGLLTIEGL (93 aa). Serine 2464 is subject to O-(pantetheine 4'-phosphoryl)serine.

Its pathway is mycotoxin biosynthesis. In terms of biological role, highly reducing polyketide synthase; part of the gene cluster that mediates the biosynthesis of pneumocandins, lipohexapeptides of the echinocandin family that prevent fungal cell wall formation by non-competitive inhibition of beta-1,3-glucan synthase. The 10,12-dimethylmyristoyl side chain is synthesized by the reducing polyketide synthase gloL/GLPKS4. The thioesterase gloN/GLHYD exclusively interacts with gloL/GLPKS4 to maintain turnover of the polyketide side chain. The 10R,12S-dimethylmyristic acid is then transferred to the first thiolation domain of the nonribosomal peptide synthetase gloA/GLNRPS4 by the acyl-AMP ligase gloD/GLligase, followed by its acylation to L-ornithine to trigger elongation of the cyclic hexapeptide. L-ornithine, 4R-hydroxyl-L-proline (generated from L-proline by the dioxygenase gloF/GLOXY2), 3S-hydroxyl-L-homotyrosine (generated by gloG/GLHtyB, gloH/GLHtyA, gloI/GLHtyC, gloJ/GLHtyD and hydroxylated at C-3 by the dioxygenase gloM/GLOXY1), 3R-hydroxyl-L-glutamine (generated from L-glutamine probably by the dioxygenase gloE/GLOXY3) and 3S-hydroxyl-L-proline (generated from L-proline by the dioxygenase gloF/GLOXY2 to yield pneumocandin B0), or 3S-hydroxyl-4S-methyl-L-proline (generated from L-leucine by the dioxygenase gloC/GLOXY4 to yield pneumocandin A0) are sequentially added to the growing chain. The last C domain of gloA/GLNRPS4 is proposed to be responsible for cyclization by condensation to form the peptide bond between L-ornithine and 3S-hydroxyl-4S-methyl-L-proline (for pneumocandin A0) or 3S-hydroxyl-L-proline (for pneumocandin B0). Finally, the subsequent C-4 hydroxylation of 3S-hydroxyl-L-homotyrosine and L-ornithine dihydroxylation at C-4 and C-5 are performed by the cytochrome P450 monooxygenases gloP/GLP450-1 and gloO/GLP450-2, respectively. This is Highly reducing polyketide synthase gloL from Glarea lozoyensis (strain ATCC 20868 / MF5171).